The chain runs to 240 residues: Ribosomal RNA large subunit methyltransferase E (240 aa).

A disordered region spans residues 1 to 28; it reads MSSSPRSPDARPLKVRVKSARTRSSSSQ. Positions 80, 82, 103, 119, and 143 each coordinate S-adenosyl-L-methionine. Catalysis depends on Lys183, which acts as the Proton acceptor.

Belongs to the class I-like SAM-binding methyltransferase superfamily. RNA methyltransferase RlmE family.

It localises to the cytoplasm. It carries out the reaction uridine(2552) in 23S rRNA + S-adenosyl-L-methionine = 2'-O-methyluridine(2552) in 23S rRNA + S-adenosyl-L-homocysteine + H(+). In terms of biological role, specifically methylates the uridine in position 2552 of 23S rRNA at the 2'-O position of the ribose in the fully assembled 50S ribosomal subunit. In Azorhizobium caulinodans (strain ATCC 43989 / DSM 5975 / JCM 20966 / LMG 6465 / NBRC 14845 / NCIMB 13405 / ORS 571), this protein is Ribosomal RNA large subunit methyltransferase E.